Here is a 328-residue protein sequence, read N- to C-terminus: Malate dehydrogenase (328 aa).

12 to 18 (GAAGQIG) is a binding site for NAD(+). Residues R95 and R101 each contribute to the substrate site. Residues N108, Q115, and 132-134 (VGN) each bind NAD(+). N134 and R165 together coordinate substrate. H190 serves as the catalytic Proton acceptor.

This sequence belongs to the LDH/MDH superfamily. MDH type 2 family.

The catalysed reaction is (S)-malate + NAD(+) = oxaloacetate + NADH + H(+). Functionally, catalyzes the reversible oxidation of malate to oxaloacetate. The polypeptide is Malate dehydrogenase (Acidovorax ebreus (strain TPSY) (Diaphorobacter sp. (strain TPSY))).